The following is a 144-amino-acid chain: Large ribosomal subunit protein uL16 (144 aa).

It belongs to the universal ribosomal protein uL16 family. As to quaternary structure, part of the 50S ribosomal subunit.

In terms of biological role, binds 23S rRNA and is also seen to make contacts with the A and possibly P site tRNAs. The sequence is that of Large ribosomal subunit protein uL16 from Bacillus pumilus (strain SAFR-032).